Reading from the N-terminus, the 105-residue chain is ESAT-6-like protein EsxB (105 aa).

The tract at residues 1 to 23 (MSQGFKTEADVMRNTAHRVDDTN) is disordered. Basic and acidic residues predominate over residues 7-21 (TEADVMRNTAHRVDD).

This sequence belongs to the WXG100 family. CFP-10 subfamily. Forms a tight 1:1 complex with EsxB.

The protein is ESAT-6-like protein EsxB of Corynebacterium diphtheriae (strain ATCC 700971 / NCTC 13129 / Biotype gravis).